Consider the following 224-residue polypeptide: N-(5'-phosphoribosyl)anthranilate isomerase (224 aa).

This sequence belongs to the TrpF family.

It catalyses the reaction N-(5-phospho-beta-D-ribosyl)anthranilate = 1-(2-carboxyphenylamino)-1-deoxy-D-ribulose 5-phosphate. The protein operates within amino-acid biosynthesis; L-tryptophan biosynthesis; L-tryptophan from chorismate: step 3/5. This Sinorhizobium fredii (strain NBRC 101917 / NGR234) protein is N-(5'-phosphoribosyl)anthranilate isomerase.